Consider the following 180-residue polypeptide: NAD(P)H-quinone oxidoreductase subunit I, chloroplastic (180 aa).

4Fe-4S ferredoxin-type domains follow at residues 55 to 84 (GRIH…VDWR) and 95 to 124 (LNYS…MTEE). Cysteine 64, cysteine 67, cysteine 70, cysteine 74, cysteine 104, cysteine 107, cysteine 110, and cysteine 114 together coordinate [4Fe-4S] cluster.

The protein belongs to the complex I 23 kDa subunit family. In terms of assembly, NDH is composed of at least 16 different subunits, 5 of which are encoded in the nucleus. The cofactor is [4Fe-4S] cluster.

The protein localises to the plastid. Its subcellular location is the chloroplast thylakoid membrane. The enzyme catalyses a plastoquinone + NADH + (n+1) H(+)(in) = a plastoquinol + NAD(+) + n H(+)(out). The catalysed reaction is a plastoquinone + NADPH + (n+1) H(+)(in) = a plastoquinol + NADP(+) + n H(+)(out). Functionally, NDH shuttles electrons from NAD(P)H:plastoquinone, via FMN and iron-sulfur (Fe-S) centers, to quinones in the photosynthetic chain and possibly in a chloroplast respiratory chain. The immediate electron acceptor for the enzyme in this species is believed to be plastoquinone. Couples the redox reaction to proton translocation, and thus conserves the redox energy in a proton gradient. In Dioscorea elephantipes (Elephant's foot yam), this protein is NAD(P)H-quinone oxidoreductase subunit I, chloroplastic.